The chain runs to 465 residues: ATP-dependent protease ATPase subunit HslU (465 aa).

Residues valine 18, 60–65 (GVGKTE), aspartate 277, glutamate 342, and arginine 414 contribute to the ATP site.

Belongs to the ClpX chaperone family. HslU subfamily. A double ring-shaped homohexamer of HslV is capped on each side by a ring-shaped HslU homohexamer. The assembly of the HslU/HslV complex is dependent on binding of ATP.

It localises to the cytoplasm. In terms of biological role, ATPase subunit of a proteasome-like degradation complex; this subunit has chaperone activity. The binding of ATP and its subsequent hydrolysis by HslU are essential for unfolding of protein substrates subsequently hydrolyzed by HslV. HslU recognizes the N-terminal part of its protein substrates and unfolds these before they are guided to HslV for hydrolysis. This Caldicellulosiruptor saccharolyticus (strain ATCC 43494 / DSM 8903 / Tp8T 6331) protein is ATP-dependent protease ATPase subunit HslU.